We begin with the raw amino-acid sequence, 225 residues long: Movement and silencing protein TGBp1 (225 aa).

In terms of domain architecture, (+)RNA virus helicase ATP-binding spans 1–110 (MDFAELLESK…KDLLKPHYIC (110 aa)). In terms of domain architecture, (+)RNA virus helicase C-terminal spans 111–225 (PTTHRFGHST…LTPDAPSTSS (115 aa)).

Belongs to the Tymovirales TGBp1 protein family. In terms of assembly, homodimer and homooligomer. Interacts with capsid protein. Interacts with host AGO1; this interaction targets the host protein for degradation, thereby suppressing the antiviral RNA silencing.

It localises to the host cytoplasm. Functionally, transports viral genome to neighboring plant cells directly through plasmosdesmata, without any budding. The movement protein allows efficient cell to cell propagation, by bypassing the host cell wall barrier. Increases plasmodesma size exclusion limit. Acts as a suppressor of RNA-mediated gene silencing, also known as post-transcriptional gene silencing (PTGS), a mechanism of plant viral defense that limits the accumulation of viral RNAs. In Citrus (ICRSV), this protein is Movement and silencing protein TGBp1.